The following is a 226-amino-acid chain: Phosphatidylserine decarboxylase proenzyme (226 aa).

The active-site Schiff-base intermediate with substrate; via pyruvic acid is Ser-184. Ser-184 bears the Pyruvic acid (Ser); by autocatalysis mark.

It belongs to the phosphatidylserine decarboxylase family. PSD-A subfamily. In terms of assembly, heterodimer of a large membrane-associated beta subunit and a small pyruvoyl-containing alpha subunit. The cofactor is pyruvate. Is synthesized initially as an inactive proenzyme. Formation of the active enzyme involves a self-maturation process in which the active site pyruvoyl group is generated from an internal serine residue via an autocatalytic post-translational modification. Two non-identical subunits are generated from the proenzyme in this reaction, and the pyruvate is formed at the N-terminus of the alpha chain, which is derived from the carboxyl end of the proenzyme. The post-translation cleavage follows an unusual pathway, termed non-hydrolytic serinolysis, in which the side chain hydroxyl group of the serine supplies its oxygen atom to form the C-terminus of the beta chain, while the remainder of the serine residue undergoes an oxidative deamination to produce ammonia and the pyruvoyl prosthetic group on the alpha chain.

Its subcellular location is the cell membrane. It catalyses the reaction a 1,2-diacyl-sn-glycero-3-phospho-L-serine + H(+) = a 1,2-diacyl-sn-glycero-3-phosphoethanolamine + CO2. Its pathway is phospholipid metabolism; phosphatidylethanolamine biosynthesis; phosphatidylethanolamine from CDP-diacylglycerol: step 2/2. Catalyzes the formation of phosphatidylethanolamine (PtdEtn) from phosphatidylserine (PtdSer). This Ehrlichia canis (strain Jake) protein is Phosphatidylserine decarboxylase proenzyme.